The chain runs to 371 residues: MASVQLQNVTKAWGEVVVSKDINLDIHEGEFVVFVGPSGCGKSTLLRMIAGLETITSGDLFIGEKRMNDTPPAERGVGMVFQSYALYPHLSVAENMSFGLKLAGAKKEVINQQVNQVAEVLQLAHLLDRKPKALSGGQRQRVAIGRTLVAEPSVFLLDEPLSNLDAALRVQMRIEISRLHKRLGRTMIYVTHDQVEAMTLADKIVVLDAGRVAQVGKPLELYHYPADRFVAGFIGSPKMNFLPVKVTATAIDQVQVELPMPNRQQVWLPVESRDVQVGANMSLGIRPEHLLPSDIADVILEGEVQVVEQLGNETQIHIQIPSIRQNLVYRQNDVVLVEEGATFAIGLPPERCHLFREDGTACRRLHKEPGV.

In terms of domain architecture, ABC transporter spans Val4–Ile234. Gly36–Ser43 serves as a coordination point for ATP.

The protein belongs to the ABC transporter superfamily. Maltooligosaccharide importer (TC 3.A.1.1.1) family. As to quaternary structure, the complex is composed of two ATP-binding proteins (MalK), two transmembrane proteins (MalG and MalK) and a solute-binding protein (MalE).

It localises to the cell inner membrane. It catalyses the reaction D-maltose(out) + ATP + H2O = D-maltose(in) + ADP + phosphate + H(+). Functionally, part of the ABC transporter complex MalEFGK involved in maltose/maltodextrin import. Responsible for energy coupling to the transport system. This is Maltose/maltodextrin import ATP-binding protein MalK from Escherichia coli O6:K15:H31 (strain 536 / UPEC).